The primary structure comprises 144 residues: UPF0102 protein BTH_I3148 (144 aa).

The segment at 1–20 (MCHARAARQATGEAEAAPRD) is disordered.

Belongs to the UPF0102 family.

This chain is UPF0102 protein BTH_I3148, found in Burkholderia thailandensis (strain ATCC 700388 / DSM 13276 / CCUG 48851 / CIP 106301 / E264).